We begin with the raw amino-acid sequence, 314 residues long: DNA-directed RNA polymerase subunit alpha (314 aa).

The interval 1–228 (MIEIEKPKIE…EHLNIFVGLT (228 aa)) is alpha N-terminal domain (alpha-NTD). The tract at residues 245–314 (KEKVLEMTIE…ELGLGLRKDD (70 aa)) is alpha C-terminal domain (alpha-CTD).

The protein belongs to the RNA polymerase alpha chain family. In terms of assembly, homodimer. RNAP is composed of a core of 2 alpha, a beta and a beta' subunit. The core is associated with a delta subunit, and at least one of epsilon or omega. When a sigma factor is associated with the core the holoenzyme is formed, which can initiate transcription.

It catalyses the reaction RNA(n) + a ribonucleoside 5'-triphosphate = RNA(n+1) + diphosphate. Functionally, DNA-dependent RNA polymerase catalyzes the transcription of DNA into RNA using the four ribonucleoside triphosphates as substrates. This Bacillus subtilis (strain 168) protein is DNA-directed RNA polymerase subunit alpha.